The sequence spans 100 residues: NADH-quinone oxidoreductase subunit K (100 aa).

3 helical membrane passes run 2-22 (IGLT…LVGI), 29-49 (IMLF…LAAI), and 60-80 (IIAF…LGLL).

The protein belongs to the complex I subunit 4L family. As to quaternary structure, NDH-1 is composed of 14 different subunits. Subunits NuoA, H, J, K, L, M, N constitute the membrane sector of the complex.

Its subcellular location is the cell inner membrane. The enzyme catalyses a quinone + NADH + 5 H(+)(in) = a quinol + NAD(+) + 4 H(+)(out). NDH-1 shuttles electrons from NADH, via FMN and iron-sulfur (Fe-S) centers, to quinones in the respiratory chain. The immediate electron acceptor for the enzyme in this species is believed to be ubiquinone. Couples the redox reaction to proton translocation (for every two electrons transferred, four hydrogen ions are translocated across the cytoplasmic membrane), and thus conserves the redox energy in a proton gradient. This Campylobacter concisus (strain 13826) protein is NADH-quinone oxidoreductase subunit K.